Reading from the N-terminus, the 113-residue chain is MATASPTRTKMRIRKGDTVQVIAGKDKGKTGEVLRTLPWENRVVVQGVNLRTRHVKPAQEGESGRIVTEEASLHASNVMVYSTDKKVASRVEIVVDKDGNKKRKLKKTGELLD.

It belongs to the universal ribosomal protein uL24 family. In terms of assembly, part of the 50S ribosomal subunit.

One of two assembly initiator proteins, it binds directly to the 5'-end of the 23S rRNA, where it nucleates assembly of the 50S subunit. Functionally, one of the proteins that surrounds the polypeptide exit tunnel on the outside of the subunit. In Synechococcus sp. (strain RCC307), this protein is Large ribosomal subunit protein uL24.